Reading from the N-terminus, the 393-residue chain is MATQIAPHGGRLVDRWLRGPAREEALERARRLPRVRLDAREAADLEMIGDGALSPLTGFMGQADYRSVVAEMRLASGLLWALPVTLAVSRAEAESIREGEEIALEDPGGRLMAVMRVAERFAYDRGAEAARCYGTTDPAHPGVRRLLRQGEVYLGGEVWLLDRPPAPFAEYRLTPAETRAEFARRGWRTVVGFQTRNPVHRAHEYIQKCALEICDGLLLHPLVGETKDDDLPAAVRMRAYEAILEGYFPRERILLAVFPAAMRYAGPREAVWHALCRKNYGCTHFIVGRDHAGVGSFYGPYDAQRIFDHLDPAELGITPLFFDHTFWCRTCGAMASPKTCPHGPEARVALSGTRVREMLYRGEAPPPEFTRPEVARVLMEGLQAAARPQSVET.

Belongs to the sulfate adenylyltransferase family.

The catalysed reaction is sulfate + ATP + H(+) = adenosine 5'-phosphosulfate + diphosphate. It functions in the pathway sulfur metabolism; hydrogen sulfide biosynthesis; sulfite from sulfate: step 1/3. The sequence is that of Sulfate adenylyltransferase from Symbiobacterium thermophilum (strain DSM 24528 / JCM 14929 / IAM 14863 / T).